Consider the following 73-residue polypeptide: uncharacterized protein (73 aa).

This is an uncharacterized protein from Human cytomegalovirus (strain AD169) (HHV-5).